The sequence spans 103 residues: Large ribosomal subunit protein bL21 (103 aa).

It belongs to the bacterial ribosomal protein bL21 family. As to quaternary structure, part of the 50S ribosomal subunit. Contacts protein L20.

This protein binds to 23S rRNA in the presence of protein L20. The polypeptide is Large ribosomal subunit protein bL21 (Salmonella schwarzengrund (strain CVM19633)).